Reading from the N-terminus, the 194-residue chain is MAAKSTQDSLPRDTGEPSALPVQGRAEGRSSEGRKERTAECALRGKQASEPALRKRNFLPGPNSDTVRPAAETELVPCSLRHPRQDLCGEHPSFPVMQPSLETQAKPERDRAVLIPPKGPWPPAQGLAMRTHCPTGPPSKAYCRGGSSSTSRNQVASLAYRTQNTAASQPRQPGGRGKEDTAGYGSCSPRSLAV.

Disordered regions lie at residues 1-72 (MAAK…PAAE) and 113-194 (VLIP…SLAV). Residues 26–39 (AEGRSSEGRKERTA) show a composition bias toward basic and acidic residues. Polar residues predominate over residues 146–171 (GSSSTSRNQVASLAYRTQNTAASQPR).

This is an uncharacterized protein from Homo sapiens (Human).